We begin with the raw amino-acid sequence, 484 residues long: uncharacterized protein (484 aa).

This sequence to M.thermoautotrophicum MTH1153.

This is an uncharacterized protein from Methanocaldococcus jannaschii (strain ATCC 43067 / DSM 2661 / JAL-1 / JCM 10045 / NBRC 100440) (Methanococcus jannaschii).